The chain runs to 272 residues: Hemin import ATP-binding protein HmuV (272 aa).

Positions 2-255 constitute an ABC transporter domain; sequence LNADHLHVAR…EPIARCYGFR (254 aa). 34–41 serves as a coordination point for ATP; the sequence is GRNGAGKS.

It belongs to the ABC transporter superfamily. Heme (hemin) importer (TC 3.A.1.14.5) family. The complex is composed of two ATP-binding proteins (HmuV), two transmembrane proteins (HmuU) and a solute-binding protein (HmuT).

The protein localises to the cell inner membrane. Functionally, part of the ABC transporter complex HmuTUV involved in hemin import. Responsible for energy coupling to the transport system. This is Hemin import ATP-binding protein HmuV from Burkholderia pseudomallei (strain 1710b).